The sequence spans 441 residues: MVLDGVRKALSRFLSGKGDYERAVKEFIRDLQKELIKADVNVKLVLELTKKIRERALKEEPPPGITRREWFVNIVYEELSKFFGGDKKPDIKPKKKPWVMLLVGLQGSGKTTTAAKLAYYYKLEGYRVGLVAADTYRPAAYDQLKQLGEQIGVPVYGEPDNKDAVEIARRGVEYFVSRGFDIVIVDTAGRHHREEDLLREMREIAENIKPDEVVLVIDAAIGQQAHDLAKKFHEATPIGSIIVTKLDGTAKGGGALSAVAVTGATIKFIGTGEKIDELEVFRPPRFVARILGIGDLEGLIEKVRRIKVEFTEKDVEEFLSGRLNMRLVYKQLVSLRKMGPLRKILQMIPGLSLKIPLEIEAGKAEEKIKKWLAIINSMTYEELDKPEIIDRRRIRRIAYGAGVKPEDVRELLKQYEMMKKLSKQLRKRRDLLEKLQLGFKP.

GTP-binding positions include 104–111 (GLQGSGKT), 186–190 (DTAGR), and 244–247 (TKLD).

This sequence belongs to the GTP-binding SRP family. SRP54 subfamily. As to quaternary structure, part of the signal recognition particle protein translocation system, which is composed of SRP and FtsY. Archaeal SRP consists of a 7S RNA molecule of 300 nucleotides and two protein subunits: SRP54 and SRP19.

The protein localises to the cytoplasm. It catalyses the reaction GTP + H2O = GDP + phosphate + H(+). Its function is as follows. Involved in targeting and insertion of nascent membrane proteins into the cytoplasmic membrane. Binds to the hydrophobic signal sequence of the ribosome-nascent chain (RNC) as it emerges from the ribosomes. The SRP-RNC complex is then targeted to the cytoplasmic membrane where it interacts with the SRP receptor FtsY. In Staphylothermus marinus (strain ATCC 43588 / DSM 3639 / JCM 9404 / F1), this protein is Signal recognition particle 54 kDa protein.